We begin with the raw amino-acid sequence, 796 residues long: Molybdenum cofactor sulfurase (796 aa).

Lys246 carries the N6-(pyridoxal phosphate)lysine modification. Cys418 is a catalytic residue. An MOSC domain is found at 650–796 (LRLLRQSSQR…LTCGDVVVVT (147 aa)). Position 752 is a phosphoserine (Ser752).

The protein belongs to the class-V pyridoxal-phosphate-dependent aminotransferase family. MOCOS subfamily. It depends on pyridoxal 5'-phosphate as a cofactor.

It catalyses the reaction Mo-molybdopterin + L-cysteine + AH2 = thio-Mo-molybdopterin + L-alanine + A + H2O. In terms of biological role, sulfurates the molybdenum cofactor. Sulfation of molybdenum is essential for xanthine dehydrogenase (XDH) and aldehyde oxidase (ADO) enzymes in which molybdenum cofactor is liganded by 1 oxygen and 1 sulfur atom in active form. The chain is Molybdenum cofactor sulfurase from Drosophila persimilis (Fruit fly).